We begin with the raw amino-acid sequence, 306 residues long: Protein SULFUR DEFICIENCY-INDUCED 1 (306 aa).

5 TPR repeats span residues 1-22, 71-104, 107-140, 167-200, and 202-233; these read MERS…NLMK, DSAL…CSKN, DSLD…IYQG, SRLL…EPDA, and KSCN…RVLG. Residues 72–139 adopt a coiled-coil conformation; it reads SALKDMAVVM…LKRKLRQIYQ (68 aa). Residues 238 to 260 adopt a coiled-coil conformation; it reads RTRQRAEELLSELESSLPRMRDA. A TPR 6 repeat occupies 270 to 304; that stretch reads LDDDFVLGLEEMTSTSFKSKRLPIFEQISSFRNTL.

It belongs to the MS5 protein family.

The protein localises to the nucleus. Functionally, involved in the utilization of stored sulfate under sulfur-deficient conditions. The sequence is that of Protein SULFUR DEFICIENCY-INDUCED 1 from Arabidopsis thaliana (Mouse-ear cress).